Consider the following 109-residue polypeptide: Spermidine export protein MdtI (109 aa).

Helical transmembrane passes span W6–L26, I36–V56, A64–F84, and L88–L108.

This sequence belongs to the drug/metabolite transporter (DMT) superfamily. Small multidrug resistance (SMR) (TC 2.A.7.1) family. MdtI subfamily. Forms a complex with MdtJ.

It localises to the cell inner membrane. Functionally, catalyzes the excretion of spermidine. This Escherichia coli O81 (strain ED1a) protein is Spermidine export protein MdtI.